The chain runs to 350 residues: Mitochondrial glycine transporter (350 aa).

3 Solcar repeats span residues S23–C107, L134–N218, and S250–K334. Helical transmembrane passes span F29–Q54, G82–I108, L140–E165, G193–K216, V254–L280, and G309–V327.

This sequence belongs to the mitochondrial carrier (TC 2.A.29) family. SLC25A38 subfamily.

It localises to the mitochondrion inner membrane. It carries out the reaction glycine(in) = glycine(out). Mitochondrial glycine transporter that imports glycine into the mitochondrial matrix. Plays an important role in providing glycine for the first enzymatic step in heme biosynthesis, the condensation of glycine with succinyl-CoA to produce 5-aminolevulinate (ALA) in the mitochondrial matrix. The chain is Mitochondrial glycine transporter from Ajellomyces capsulatus (strain NAm1 / WU24) (Darling's disease fungus).